We begin with the raw amino-acid sequence, 205 residues long: Dephospho-CoA kinase (205 aa).

The DPCK domain maps to 15–205 (VIGLTGGIAT…VERALDQASI (191 aa)). Position 23-28 (23-28 (ATGKST)) interacts with ATP.

This sequence belongs to the CoaE family.

Its subcellular location is the cytoplasm. It catalyses the reaction 3'-dephospho-CoA + ATP = ADP + CoA + H(+). It functions in the pathway cofactor biosynthesis; coenzyme A biosynthesis; CoA from (R)-pantothenate: step 5/5. In terms of biological role, catalyzes the phosphorylation of the 3'-hydroxyl group of dephosphocoenzyme A to form coenzyme A. The protein is Dephospho-CoA kinase of Gloeobacter violaceus (strain ATCC 29082 / PCC 7421).